We begin with the raw amino-acid sequence, 368 residues long: Aminomethyltransferase (368 aa).

Belongs to the GcvT family. As to quaternary structure, the glycine cleavage system is composed of four proteins: P, T, L and H.

It carries out the reaction N(6)-[(R)-S(8)-aminomethyldihydrolipoyl]-L-lysyl-[protein] + (6S)-5,6,7,8-tetrahydrofolate = N(6)-[(R)-dihydrolipoyl]-L-lysyl-[protein] + (6R)-5,10-methylene-5,6,7,8-tetrahydrofolate + NH4(+). In terms of biological role, the glycine cleavage system catalyzes the degradation of glycine. In Xylella fastidiosa (strain M12), this protein is Aminomethyltransferase.